A 388-amino-acid polypeptide reads, in one-letter code: Succinate--CoA ligase [ADP-forming] subunit beta (388 aa).

Positions 9–244 constitute an ATP-grasp domain; sequence KEILRKFGVA…LDEEDPAEIE (236 aa). ATP-binding positions include Lys46, 53–55, Glu99, Ala102, and Glu107; that span reads GRG. Asn199 and Asp213 together coordinate Mg(2+). Residues Asn264 and 321–323 each bind substrate; that span reads GIM.

It belongs to the succinate/malate CoA ligase beta subunit family. Heterotetramer of two alpha and two beta subunits. Mg(2+) is required as a cofactor.

The catalysed reaction is succinate + ATP + CoA = succinyl-CoA + ADP + phosphate. It carries out the reaction GTP + succinate + CoA = succinyl-CoA + GDP + phosphate. The protein operates within carbohydrate metabolism; tricarboxylic acid cycle; succinate from succinyl-CoA (ligase route): step 1/1. In terms of biological role, succinyl-CoA synthetase functions in the citric acid cycle (TCA), coupling the hydrolysis of succinyl-CoA to the synthesis of either ATP or GTP and thus represents the only step of substrate-level phosphorylation in the TCA. The beta subunit provides nucleotide specificity of the enzyme and binds the substrate succinate, while the binding sites for coenzyme A and phosphate are found in the alpha subunit. In Burkholderia ambifaria (strain MC40-6), this protein is Succinate--CoA ligase [ADP-forming] subunit beta.